We begin with the raw amino-acid sequence, 473 residues long: Photosystem II CP43 reaction center protein (473 aa).

Positions 1-14 (MKTLYSLRRFYHVE) are excised as a propeptide. N-acetylthreonine is present on Thr15. Thr15 bears the Phosphothreonine mark. Helical transmembrane passes span 69–93 (LFEV…PHLA), 134–155 (LLGP…KDRN), 178–200 (KALY…RKIT), 255–275 (KPFA…LSYS), and 291–312 (WFNN…ASQA). Position 367 (Glu367) interacts with [CaMn4O5] cluster. The helical transmembrane segment at 447–471 (RARAAAAGFEKGIDRDFEPVLSMTP) threads the bilayer.

It belongs to the PsbB/PsbC family. PsbC subfamily. PSII is composed of 1 copy each of membrane proteins PsbA, PsbB, PsbC, PsbD, PsbE, PsbF, PsbH, PsbI, PsbJ, PsbK, PsbL, PsbM, PsbT, PsbX, PsbY, PsbZ, Psb30/Ycf12, at least 3 peripheral proteins of the oxygen-evolving complex and a large number of cofactors. It forms dimeric complexes. It depends on Binds multiple chlorophylls and provides some of the ligands for the Ca-4Mn-5O cluster of the oxygen-evolving complex. It may also provide a ligand for a Cl- that is required for oxygen evolution. PSII binds additional chlorophylls, carotenoids and specific lipids. as a cofactor.

The protein resides in the plastid. Its subcellular location is the chloroplast thylakoid membrane. One of the components of the core complex of photosystem II (PSII). It binds chlorophyll and helps catalyze the primary light-induced photochemical processes of PSII. PSII is a light-driven water:plastoquinone oxidoreductase, using light energy to abstract electrons from H(2)O, generating O(2) and a proton gradient subsequently used for ATP formation. The sequence is that of Photosystem II CP43 reaction center protein from Capsella bursa-pastoris (Shepherd's purse).